Reading from the N-terminus, the 879-residue chain is Alanine--tRNA ligase (879 aa).

Histidine 566, histidine 570, cysteine 668, and histidine 672 together coordinate Zn(2+).

The protein belongs to the class-II aminoacyl-tRNA synthetase family. It depends on Zn(2+) as a cofactor.

Its subcellular location is the cytoplasm. It catalyses the reaction tRNA(Ala) + L-alanine + ATP = L-alanyl-tRNA(Ala) + AMP + diphosphate. Catalyzes the attachment of alanine to tRNA(Ala) in a two-step reaction: alanine is first activated by ATP to form Ala-AMP and then transferred to the acceptor end of tRNA(Ala). Also edits incorrectly charged Ser-tRNA(Ala) and Gly-tRNA(Ala) via its editing domain. The protein is Alanine--tRNA ligase of Listeria innocua serovar 6a (strain ATCC BAA-680 / CLIP 11262).